Consider the following 361-residue polypeptide: Serpentine receptor class epsilon-32 (361 aa).

The next 7 membrane-spanning stretches (helical) occupy residues 34 to 54, 66 to 86, 124 to 144, 168 to 188, 195 to 215, 256 to 276, and 286 to 306; these read IIEL…LYVM, ILYI…LITI, LLIF…YGIL, IPIA…LSVL, FLSH…YLFI, LVFV…ALAF, and FVEN…MLTI.

This sequence belongs to the nematode receptor-like protein sre family.

The protein resides in the membrane. This Caenorhabditis elegans protein is Serpentine receptor class epsilon-32 (sre-32).